A 444-amino-acid chain; its full sequence is tRNA-2-methylthio-N(6)-dimethylallyladenosine synthase (444 aa).

The MTTase N-terminal domain occupies 3–117; that stretch reads RGLYIESYGC…LPELIMKVKR (115 aa). Residues C12, C48, C80, C155, C159, and C162 each coordinate [4Fe-4S] cluster. The Radical SAM core domain occupies 141-374; the sequence is ANGGVSAYVS…LLTKQQLQFN (234 aa). Positions 375-441 constitute a TRAM domain; it reads KSMEGRVMDV…QNSLEGTVLS (67 aa).

This sequence belongs to the methylthiotransferase family. MiaB subfamily. In terms of assembly, monomer. [4Fe-4S] cluster is required as a cofactor.

Its subcellular location is the cytoplasm. The catalysed reaction is N(6)-dimethylallyladenosine(37) in tRNA + (sulfur carrier)-SH + AH2 + 2 S-adenosyl-L-methionine = 2-methylsulfanyl-N(6)-dimethylallyladenosine(37) in tRNA + (sulfur carrier)-H + 5'-deoxyadenosine + L-methionine + A + S-adenosyl-L-homocysteine + 2 H(+). Catalyzes the methylthiolation of N6-(dimethylallyl)adenosine (i(6)A), leading to the formation of 2-methylthio-N6-(dimethylallyl)adenosine (ms(2)i(6)A) at position 37 in tRNAs that read codons beginning with uridine. The polypeptide is tRNA-2-methylthio-N(6)-dimethylallyladenosine synthase (Anaplasma phagocytophilum (strain HZ)).